The primary structure comprises 283 residues: 2-heptyl-4(1H)-quinolone synthase subunit PqsB (283 aa).

It belongs to the thiolase-like superfamily. FabH family. As to quaternary structure, forms a tight complex with PqsC.

It localises to the cytoplasm. With respect to regulation, activity of the complex is inhibited by 2-aminoacetophenone (2-AA). Its function is as follows. Required for the biosynthesis of the quorum-sensing signaling molecules 2-heptyl-4(1H)-quinolone (HHQ) and 2-heptyl-3-hydroxy-4(1H)-quinolone (Pseudomonas quinolone signal or PQS), which are important for biofilm formation and virulence. The PqsC/PqsB complex catalyzes the condensation of 2-aminobenzoylacetate (2-ABA) and octanoyl-CoA to form HHQ. PqsB, together with PqsC, catalyzes the coupling of 2-ABA with the octanoate group, leading to decarboxylation and dehydration, and resulting in closure of the quinoline ring. PqsB is probably required for the proper folding of PqsC rather than for a direct enzymatic role in the process. The sequence is that of 2-heptyl-4(1H)-quinolone synthase subunit PqsB from Pseudomonas aeruginosa (strain ATCC 15692 / DSM 22644 / CIP 104116 / JCM 14847 / LMG 12228 / 1C / PRS 101 / PAO1).